The primary structure comprises 345 residues: Adenine deaminase (345 aa).

Zn(2+) contacts are provided by histidine 20, histidine 22, and histidine 204. Glutamate 207 serves as the catalytic Proton donor. A Zn(2+)-binding site is contributed by aspartate 285. Residue aspartate 286 coordinates substrate.

The protein belongs to the metallo-dependent hydrolases superfamily. Adenosine and AMP deaminases family. Adenine deaminase type 2 subfamily. The cofactor is Zn(2+).

It catalyses the reaction adenine + H2O + H(+) = hypoxanthine + NH4(+). Catalyzes the hydrolytic deamination of adenine to hypoxanthine. Plays an important role in the purine salvage pathway and in nitrogen catabolism. The sequence is that of Adenine deaminase from Ralstonia nicotianae (strain ATCC BAA-1114 / GMI1000) (Ralstonia solanacearum).